We begin with the raw amino-acid sequence, 540 residues long: Raucaffricine-O-beta-D-glucosidase (540 aa).

Residues Gln-36, His-140, and 185–186 contribute to the a beta-D-glucoside site; that span reads NE. The active-site Proton donor is the Glu-186. Cys-221 and Cys-230 are disulfide-bonded. A beta-D-glucoside contacts are provided by residues Tyr-347, Glu-420, Trp-469, 476–477, and Phe-485; that span reads EW. The active-site Nucleophile is the Glu-420.

Belongs to the glycosyl hydrolase 1 family.

The enzyme catalyses raucaffricine + H2O = vomilenine + D-glucose. It catalyses the reaction vomilenine + UDP-alpha-D-glucose = raucaffricine + UDP + H(+). In terms of biological role, glucosidase specifically involved in alkaloid biosynthesis leading to the accumulation of several alkaloids, including ajmaline, an important plant-derived pharmaceutical used in the treatment of heart disorders. The polypeptide is Raucaffricine-O-beta-D-glucosidase (Rauvolfia serpentina (Serpentine wood)).